The following is a 264-amino-acid chain: Glutamate racemase (264 aa).

Residues 10–11 and 42–43 contribute to the substrate site; these read DS and YG. The Proton donor/acceptor role is filled by Cys73. Substrate is bound at residue 74 to 75; it reads NT. The active-site Proton donor/acceptor is the Cys183. Substrate is bound at residue 184 to 185; the sequence is TH.

Belongs to the aspartate/glutamate racemases family.

It carries out the reaction L-glutamate = D-glutamate. The protein operates within cell wall biogenesis; peptidoglycan biosynthesis. Its function is as follows. Provides the (R)-glutamate required for cell wall biosynthesis. This chain is Glutamate racemase, found in Streptococcus pyogenes serotype M2 (strain MGAS10270).